The chain runs to 662 residues: Calcium-dependent protease (662 aa).

The 334-residue stretch at 196-529 (QWHLKQTTIG…YGRINALKAV (334 aa)) folds into the Peptidase S8 domain. Catalysis depends on charge relay system residues Asp-233, His-270, and Ser-466. Residues 535–662 (AQPEPVSIFT…IRSLTIELGF (128 aa)) enclose the P/Homo B domain.

This sequence belongs to the peptidase S8 family.

It localises to the cytoplasm. Its function is as follows. Degrades phycobiliproteins in vitro. Has a substrate specificity similar to that of trypsin. The protein is Calcium-dependent protease (prcA) of Trichormus variabilis (strain ATCC 29413 / PCC 7937) (Anabaena variabilis).